Here is a 256-residue protein sequence, read N- to C-terminus: Geranylgeranylglyceryl phosphate synthase (256 aa).

Residues Asp28 and Ser53 each contribute to the Mg(2+) site. Sn-glycerol 1-phosphate-binding positions include 172-178 (YLEAGSG), 203-204 (GG), and 225-226 (GT).

It belongs to the GGGP/HepGP synthase family. Group II subfamily. Mg(2+) serves as cofactor.

The protein localises to the cytoplasm. It carries out the reaction sn-glycerol 1-phosphate + (2E,6E,10E)-geranylgeranyl diphosphate = sn-3-O-(geranylgeranyl)glycerol 1-phosphate + diphosphate. The protein operates within membrane lipid metabolism; glycerophospholipid metabolism. Functionally, prenyltransferase that catalyzes the transfer of the geranylgeranyl moiety of geranylgeranyl diphosphate (GGPP) to the C3 hydroxyl of sn-glycerol-1-phosphate (G1P). This reaction is the first ether-bond-formation step in the biosynthesis of archaeal membrane lipids. This Methanococcus maripaludis (strain C6 / ATCC BAA-1332) protein is Geranylgeranylglyceryl phosphate synthase.